Here is a 405-residue protein sequence, read N- to C-terminus: Peroxisome biogenesis factor 3 (405 aa).

Residues 1–26 (MENFQFEDLSPNKVSKVYQDLKKFGS) lie on the Cytoplasmic side of the membrane. A helical membrane pass occupies residues 27-49 (FLYNHKMGVFLVSFSSGVAYLYH). The Peroxisomal portion of the chain corresponds to 50–124 (NITQSHKRKQ…EKLKLTDQLK (75 aa)). A helical membrane pass occupies residues 125-144 (VSIITKLFSVLYIIPMVTIF). The Cytoplasmic segment spans residues 145–405 (NRLQINLIGK…NDLDFNKVQF (261 aa)).

This sequence belongs to the peroxin-3 family.

The protein resides in the peroxisome membrane. Involved in peroxisome biosynthesis. The sequence is that of Peroxisome biogenesis factor 3 (pex3) from Dictyostelium discoideum (Social amoeba).